The following is a 173-amino-acid chain: MSKAEMVANKIKERFPNAEVVVKTNKWGRERVWVRISREEYKELMKFIRELDPEAHYSIGIEQDWGDELGFLNHILLFYDEPPGVSLLIDVHAPKDNPVLPDTSDIFPISLQFEREGMEMVGLDFEGAPDKRRLFLPDDFPEGIYPLRTDEKGVPEEMVKNAGHPYLLRREKK.

It belongs to the complex I 30 kDa subunit family. The membrane-bound hydrogenase complex is composed of MbhK and MbhL, and may also contain MbhJ. The cofactor is Ni(2+).

Its subcellular location is the cell membrane. The catalysed reaction is H2 + 2 oxidized [2Fe-2S]-[ferredoxin] = 2 reduced [2Fe-2S]-[ferredoxin] + 2 H(+). Its activity is regulated as follows. Inhibited by 0.1 mM Cu(2+). Its function is as follows. Beta subunit of a hydrogen-evolving hydrogenase that utilizes protons both as a substrate for hydrogen production and proton translocation. Acts by coupling the redox reaction via ferredoxin and iron-sulfur (Fe-S) clusters to proton translocation across the membrane thereby conserving the redox energy in a proton gradient. The sequence is that of Membrane-bound hydrogenase subunit beta from Pyrococcus furiosus (strain ATCC 43587 / DSM 3638 / JCM 8422 / Vc1).